A 471-amino-acid polypeptide reads, in one-letter code: Cytolysin (471 aa).

An N-terminal signal peptide occupies residues 1–20 (MKKMTLFTLSLLATAVQVGA). One can recognise a Ricin B-type lectin domain in the interval 338-465 (AHVTLQSLSN…EANQARWKPT (128 aa)).

Belongs to the HlyA hemolysin family.

Bacterial hemolysins are exotoxins that attack blood cell membranes and cause cell rupture by mechanisms not clearly defined. This chain is Cytolysin (vvhA), found in Vibrio vulnificus (strain CMCP6).